Consider the following 92-residue polypeptide: C-C motif chemokine 3 (92 aa).

Positions 1-19 (MKVPGAALAVLLCTMSLCS) are cleaved as a signal peptide. 2 disulfide bridges follow: Cys-33–Cys-57 and Cys-34–Cys-73.

The protein belongs to the intercrine beta (chemokine CC) family. Self-associates. Also heterodimer of MIP-1-alpha(4-69) and MIP-1-beta(3-69). Interacts with CCR1.

The protein localises to the secreted. Monokine with inflammatory and chemokinetic properties. Binds to CCR1, CCR4 and CCR5. One of the major HIV-suppressive factors produced by CD8+ T-cells. Recombinant MIP-1-alpha induces a dose-dependent inhibition of different strains of HIV-1, HIV-2, and simian immunodeficiency virus (SIV). The protein is C-C motif chemokine 3 (CCL3) of Canis lupus familiaris (Dog).